Here is a 262-residue protein sequence, read N- to C-terminus: pFDCC methylesterase MES16 (262 aa).

The Acyl-ester intermediate role is filled by S87. Active-site charge relay system residues include D211 and H239.

This sequence belongs to the AB hydrolase superfamily. Methylesterase family.

The protein localises to the cytoplasm. It catalyses the reaction methyl (indol-3-yl)acetate + H2O = (indol-3-yl)acetate + methanol + H(+). It carries out the reaction methyl (-)-jasmonate + H2O = jasmonate + methanol + H(+). The enzyme catalyses primary fluorescent dioxobilin-type chlorophyll catabolite + H2O = O13(4)-desmethyl pFDCC + methanol + H(+). It functions in the pathway plant hormone biosynthesis. Its pathway is lipid metabolism; oxylipin biosynthesis. The protein operates within porphyrin-containing compound metabolism; chlorophyll degradation. Its function is as follows. Involved in the chlorophyll breakdown by its action in fluorescent chlorophyll catabolites (FCCs) demethylation. Demethylates the C13(2)-carboxymethyl group present at the isocyclic ring of chlorophyll. Uses primary fluorescent dioxobilin-type chlorophyll catabolite (pFDCC) as substrate to produce O13(4)-desmethyl pFDCC. Also able to catalyze pheophorbides in vitro. Methylesterase shown to have carboxylesterase activity, methyl indole-3-acetic acid (MeIAA) esterase activity and methyl jasmonate (MeJA) esterase activity in vitro. This is pFDCC methylesterase MES16 from Arabidopsis thaliana (Mouse-ear cress).